We begin with the raw amino-acid sequence, 321 residues long: Porin Omp2a (321 aa).

Residues 1–22 (MNIKSLLLGSAAALVAASGAQA) form the signal peptide.

This sequence belongs to the alphaproteobacteria porin family. As to quaternary structure, monomer.

It localises to the cell outer membrane. Its function is as follows. Forms passive diffusion pores that allow small molecular weight hydrophilic materials across the outer membrane. The polypeptide is Porin Omp2a (omp2a) (Brucella abortus (strain S19)).